The following is a 507-amino-acid chain: MIHLTGENLKFKEIEKVINHGEQVELSTQAKENIIASRRLIDDLTEKESIVYGVTTGFGKFSDTFISSENLQQLQENLILSHSAGVGEPFSEQVVRGMMLFRANSLAKGHSGIRLETVQLLIDMLNKGVHPIIPSKGSLGASGDLAPLAHMVLVMIGKGEAYYHGDRMAGDKALSEAGLSPVKLGAKEGLALINGTQAIVSVGTLTWLRMKNLLKTADICAAMTIDSLEGILDAFQDKIFRLRPHPGHGKTAENIRRLLQDSEIIENREHKRVQDAYTLRCIPQIHGASKDAHEHIGGILNREINSTTDNPLIFPQENEVISGGNFHGQPLALPMDYMSMAIAELANVAERRIERLVNPNLNFGLPPFLIKDGGVSSGFMIAQYTAASLVSENKSLAHPASVDSIPSSANQEDHVSMGTIGARKALSILENTEKVLAIELLCASQALDYRQPRQSGSGTRKAYELVREQVPHLAEDRELASDIETVEQLIVEGRLVSELEKTIGELK.

The 5-imidazolinone (Ala-Gly) cross-link spans 141–143; that stretch reads ASG. The residue at position 142 (serine 142) is a 2,3-didehydroalanine (Ser).

This sequence belongs to the PAL/histidase family. In terms of processing, contains an active site 4-methylidene-imidazol-5-one (MIO), which is formed autocatalytically by cyclization and dehydration of residues Ala-Ser-Gly.

The protein resides in the cytoplasm. It carries out the reaction L-histidine = trans-urocanate + NH4(+). The protein operates within amino-acid degradation; L-histidine degradation into L-glutamate; N-formimidoyl-L-glutamate from L-histidine: step 1/3. The sequence is that of Histidine ammonia-lyase from Natranaerobius thermophilus (strain ATCC BAA-1301 / DSM 18059 / JW/NM-WN-LF).